A 79-amino-acid polypeptide reads, in one-letter code: uncharacterized protein (79 aa).

The first 33 residues, Met1–Ala33, serve as a signal peptide directing secretion.

This is an uncharacterized protein from Escherichia coli O157:H7.